The sequence spans 837 residues: WW domain-containing protein tag-325 (837 aa).

A compositionally biased stretch (polar residues) spans 1 to 11 (MTTAVQPSDTT). Residues 1-66 (MTTAVQPSDT…SNGQNYADDP (66 aa)) form a disordered region. The span at 33 to 43 (SESAESSSSSS) shows a compositional bias: low complexity. The segment covering 44 to 61 (QTNVSAANTLPRESNGQN) has biased composition (polar residues). Positions 96-129 (RDLLNGWFEYETDVGRTFFFNKETGKSQWIPPRF) constitute a WW domain. Positions 150–161 (TCSFQGSSTSSS) are enriched in low complexity. 5 disordered regions span residues 150–181 (TCSFQGSSTSSSEEQKENKMRESLADDDRKSQ), 194–257 (DDVD…STAS), 338–403 (TTSS…EPAE), 548–574 (MRRRDDPMSQSAIETVSTSVSTDEPRP), and 778–800 (KNKKAGKKAKPSKKEETQATPVQ). Over residues 162 to 181 (EEQKENKMRESLADDDRKSQ) the composition is skewed to basic and acidic residues. The segment covering 247–257 (PTSSRKASTAS) has biased composition (polar residues). The span at 371 to 403 (RCEERRGSGDGREPVRTIRCGDLERSENDEPAE) shows a compositional bias: basic and acidic residues. Residues 386–505 (RTIRCGDLER…WYKSLEEVVA (120 aa)) form the PH domain. Positions 556–569 (SQSAIETVSTSVST) are enriched in polar residues. Residues 610 to 827 (STLSAICQHE…YLLESANKFD (218 aa)) form the Rho-GAP domain. The segment covering 778–788 (KNKKAGKKAKP) has biased composition (basic residues).

The sequence is that of WW domain-containing protein tag-325 (tag-325) from Caenorhabditis elegans.